A 1819-amino-acid chain; its full sequence is Gamma-tubulin complex component 6 (1819 aa).

3 disordered regions span residues 810–889, 929–951, and 1000–1023; these read SEAH…GARP, LPPSAPGEAPAAASTQPSRPQEY, and RETLLPSHPPRRAALEEGSSQPTE. 9 repeat units span residues 1027–1053, 1054–1080, 1081–1107, 1108–1134, 1135–1161, 1162–1188, 1189–1215, 1216–1242, and 1243–1269. The interval 1027–1269 is 9 X 27 AA tandem repeats; the sequence is GQVSGGGLPT…VSTRPRWNTH (243 aa). The interval 1271–1412 is disordered; the sequence is PIPPPHMVLG…EAEASAAEAQ (142 aa). A compositionally biased stretch (polar residues) spans 1297-1314; the sequence is PPGHTSQSALSLGAQSTV. Residues 1321 to 1335 are compositionally biased toward low complexity; it reads LPVEVGPSLSSPSSG. Residues 1384-1398 are compositionally biased toward polar residues; it reads WPLNSQEDTAAQSSP.

This sequence belongs to the TUBGCP family. Component of the gamma-tubulin ring complex (gTuRC) consisting of TUBGCP2, TUBGCP3, TUBGCP4, TUBGCP5 and TUBGCP6 and gamma-tubulin TUBG1 or TUBG2. TUBGCP2, TUBGCP3, TUBGCP4, TUBGCP5 and TUBGCP6 assemble in a 5:5:2:1:1 stoichiometry; each is associated with a gamma-tubulin, thereby arranging 14 gamma-tubulins in a helical manner. Gamma-tubulin at the first position is blocked by TUBGCP3 at the last position, allowing 13 protafilaments to grow into a microtubule. The gTuRC (via TUBGCP3 and TUBGCP6) interacts with ACTB and MZT1; the interactions form a luminal bridge that stabilizes the initial structure during complex assembly. The gTuRC (via TUBGCP2) interacts with MZT2A/MZT2B and CDK5RAP2 (via CM1 motif); the interactions play a role in gTuRC activation.

It is found in the cytoplasm. The protein localises to the cytoskeleton. The protein resides in the microtubule organizing center. It localises to the centrosome. Functionally, component of the gamma-tubulin ring complex (gTuRC) which mediates microtubule nucleation. The gTuRC regulates the minus-end nucleation of alpha-beta tubulin heterodimers that grow into microtubule protafilaments, a critical step in centrosome duplication and spindle formation. The polypeptide is Gamma-tubulin complex component 6 (TUBGCP6) (Homo sapiens (Human)).